The following is a 294-amino-acid chain: Bifunctional protein FolD (294 aa).

NADP(+) is bound by residues 166-168, S191, and I232; that span reads GRS.

This sequence belongs to the tetrahydrofolate dehydrogenase/cyclohydrolase family. As to quaternary structure, homodimer.

The enzyme catalyses (6R)-5,10-methylene-5,6,7,8-tetrahydrofolate + NADP(+) = (6R)-5,10-methenyltetrahydrofolate + NADPH. It carries out the reaction (6R)-5,10-methenyltetrahydrofolate + H2O = (6R)-10-formyltetrahydrofolate + H(+). It participates in one-carbon metabolism; tetrahydrofolate interconversion. Its function is as follows. Catalyzes the oxidation of 5,10-methylenetetrahydrofolate to 5,10-methenyltetrahydrofolate and then the hydrolysis of 5,10-methenyltetrahydrofolate to 10-formyltetrahydrofolate. The sequence is that of Bifunctional protein FolD from Bradyrhizobium sp. (strain BTAi1 / ATCC BAA-1182).